The primary structure comprises 490 residues: Limb region 1 protein (490 aa).

At 1–19 (MEGQDEVSAREQHFHSQVR) the chain is on the extracellular side. The chain crosses the membrane as a helical span at residues 20–40 (ESTICFLLFAILYIVSYFIII). The Cytoplasmic portion of the chain corresponds to 41–62 (RYKRKSDEQEDEDAVVNRISLF). Residues 63–83 (LSTFTLAVSAGAVLLLPFSII) form a helical membrane-spanning segment. At 84-110 (SNEILLAFPHNYYIQWLNGSLIHGLWN) the chain is on the extracellular side. Residues 111–131 (LASLFSNLCLFVLMPFAFFFL) form a helical membrane-spanning segment. The Cytoplasmic segment spans residues 132-151 (ESEGFAGLKKGIRARILETL). A helical transmembrane segment spans residues 152 to 172 (VMLLLLALLILGMVWVASALI). Over 173–187 (DSDAASMESLYDLWE) the chain is Extracellular. The chain crosses the membrane as a helical span at residues 188–208 (FYLPYLYSCISLMGCLLLLLC). The Cytoplasmic segment spans residues 209–291 (TPVGLSRMFT…RKKASAWERN (83 aa)). A coiled-coil region spans residues 256–287 (SSVEYNVMELEQELENVKILKTKLERRKKASA). The helical transmembrane segment at 292-312 (LVYPAVMVLLLIETSISVLLV) threads the bilayer. Residues 313 to 339 (ACNILCLLVDETAMPKGTRGPGIGSAS) are Extracellular-facing. Residues 340–360 (LSTFGFVGAALEIILIFYLMV) traverse the membrane as a helical segment. Residues 361–383 (SSVVGFYSLRFFGNFTPKKDDTT) lie on the Cytoplasmic side of the membrane. Residues 384–404 (MTKIIGNCVSILVLSSALPVM) traverse the membrane as a helical segment. Residues 405–426 (SRTLGITRFDLLGDFGRFNWLG) are Extracellular-facing. Residues 427–447 (NFYIVLSYNLLFAIMTTLCLI) traverse the membrane as a helical segment. At 448–490 (RKFTSAVREELFKALGLHKLHLSDTSRDSETTKPSANGHQKAL) the chain is on the cytoplasmic side.

The protein belongs to the LIMR family.

The protein localises to the membrane. In terms of biological role, putative membrane receptor. This chain is Limb region 1 protein (Lmbr1), found in Mus musculus (Mouse).